Consider the following 305-residue polypeptide: tRNA uridine(34) hydroxylase (305 aa).

The region spanning 130-228 (DDPDTLVIDT…YLGEIPEQES (99 aa)) is the Rhodanese domain. C188 acts as the Cysteine persulfide intermediate in catalysis.

The protein belongs to the TrhO family.

It carries out the reaction uridine(34) in tRNA + AH2 + O2 = 5-hydroxyuridine(34) in tRNA + A + H2O. Its function is as follows. Catalyzes oxygen-dependent 5-hydroxyuridine (ho5U) modification at position 34 in tRNAs. This is tRNA uridine(34) hydroxylase from Synechococcus sp. (strain CC9902).